A 296-amino-acid polypeptide reads, in one-letter code: NAD kinase (296 aa).

The active-site Proton acceptor is the Asp-72. Residues 72-73 (DG), 146-147 (ND), Arg-157, Lys-174, Asp-176, 187-192 (TAYALS), and Gln-247 each bind NAD(+).

It belongs to the NAD kinase family. A divalent metal cation is required as a cofactor.

It localises to the cytoplasm. The catalysed reaction is NAD(+) + ATP = ADP + NADP(+) + H(+). Involved in the regulation of the intracellular balance of NAD and NADP, and is a key enzyme in the biosynthesis of NADP. Catalyzes specifically the phosphorylation on 2'-hydroxyl of the adenosine moiety of NAD to yield NADP. The chain is NAD kinase from Pseudomonas syringae pv. tomato (strain ATCC BAA-871 / DC3000).